A 316-amino-acid polypeptide reads, in one-letter code: Apolipoprotein E (316 aa).

The first 18 residues, 1-18 (MKVLWVAVVVALLAGCQA), serve as a signal peptide directing secretion. 8 consecutive repeat copies span residues 79–100 (ALME…GQLG), 101–122 (PMAQ…ARLG), 123–144 (SDME…AMLG), 145–166 (QSTE…KRLL), 167–188 (RDAD…EGAE), 189–210 (RSLS…SRAA), 211–232 (TLST…QKLH), and 233–254 (GRLE…QQLE). Positions 79–254 (ALMEETMKEV…RLDKIRQQLE (176 aa)) are 8 X 22 AA approximate tandem repeats. At Met142 the chain carries Methionine sulfoxide. The residue at position 146 (Ser146) is a Phosphoserine; by FAM20C. The tract at residues 157-167 (HLRKLRKRLLR) is LDL and other lipoprotein receptors binding. 161–164 (LRKR) is a heparin binding site. Residues 209-289 (AATLSTLAGQ…SWFEPLVEDM (81 aa)) are lipid-binding and lipoprotein association. Thr211 is a glycosylation site (O-linked (GalNAc...) threonine). 228–235 (RQKLHGRL) is a heparin binding site. The tract at residues 265–316 (NQMRLQAEAFQARLRSWFEPLVEDMQRQWAGLVEKVQLALRPSPTSPPSENH) is homooligomerization. The interval 277 to 289 (RLRSWFEPLVEDM) is specificity for association with VLDL.

This sequence belongs to the apolipoprotein A1/A4/E family. In terms of assembly, homotetramer. May interact with ABCA1; functionally associated with ABCA1 in the biogenesis of HDLs. May interact with APP/A4 amyloid-beta peptide; the interaction is extremely stable in vitro but its physiological significance is unclear. May interact with MAPT. May interact with MAP2. In the cerebrospinal fluid, interacts with secreted SORL1. Interacts with PMEL; this allows the loading of PMEL luminal fragment on ILVs to induce fibril nucleation. In terms of processing, APOE exists as multiple glycosylated and sialylated glycoforms within cells and in plasma. The extent of glycosylation and sialylation are tissue and context specific. Glycated in plasma VLDL. Post-translationally, phosphorylated by FAM20C in the extracellular medium.

The protein resides in the secreted. It localises to the extracellular space. Its subcellular location is the extracellular matrix. It is found in the extracellular vesicle. The protein localises to the endosome. The protein resides in the multivesicular body. Functionally, APOE is an apolipoprotein, a protein associating with lipid particles, that mainly functions in lipoprotein-mediated lipid transport between organs via the plasma and interstitial fluids. APOE is a core component of plasma lipoproteins and is involved in their production, conversion and clearance. Apolipoproteins are amphipathic molecules that interact both with lipids of the lipoprotein particle core and the aqueous environment of the plasma. As such, APOE associates with chylomicrons, chylomicron remnants, very low density lipoproteins (VLDL) and intermediate density lipoproteins (IDL) but shows a preferential binding to high-density lipoproteins (HDL). It also binds a wide range of cellular receptors including the LDL receptor/LDLR and the very low-density lipoprotein receptor/VLDLR that mediate the cellular uptake of the APOE-containing lipoprotein particles. Finally, APOE also has a heparin-binding activity and binds heparan-sulfate proteoglycans on the surface of cells, a property that supports the capture and the receptor-mediated uptake of APOE-containing lipoproteins by cells. This is Apolipoprotein E (APOE) from Bos mutus grunniens (Wild yak).